The sequence spans 77 residues: Acyl carrier protein (77 aa).

The Carrier domain occupies 1 to 76 (MSLEDDVKAI…DVIKYIQERQ (76 aa)). Ser-36 carries the post-translational modification O-(pantetheine 4'-phosphoryl)serine.

This sequence belongs to the acyl carrier protein (ACP) family. In terms of processing, 4'-phosphopantetheine is transferred from CoA to a specific serine of apo-ACP by AcpS. This modification is essential for activity because fatty acids are bound in thioester linkage to the sulfhydryl of the prosthetic group.

The protein resides in the cytoplasm. It functions in the pathway lipid metabolism; fatty acid biosynthesis. Functionally, carrier of the growing fatty acid chain in fatty acid biosynthesis. The polypeptide is Acyl carrier protein (Chlamydia trachomatis serovar A (strain ATCC VR-571B / DSM 19440 / HAR-13)).